Reading from the N-terminus, the 202-residue chain is LexA repressor (202 aa).

Positions 28–48 (IAEIARAIGVSSPHGVREQLR) form a DNA-binding region, H-T-H motif. Residues S120 and K157 each act as for autocatalytic cleavage activity in the active site.

Belongs to the peptidase S24 family. In terms of assembly, homodimer.

It carries out the reaction Hydrolysis of Ala-|-Gly bond in repressor LexA.. In terms of biological role, represses a number of genes involved in the response to DNA damage (SOS response), including recA and lexA. In the presence of single-stranded DNA, RecA interacts with LexA causing an autocatalytic cleavage which disrupts the DNA-binding part of LexA, leading to derepression of the SOS regulon and eventually DNA repair. This chain is LexA repressor, found in Methylococcus capsulatus (strain ATCC 33009 / NCIMB 11132 / Bath).